The following is a 155-amino-acid chain: Small ribosomal subunit protein uS7 (155 aa).

Belongs to the universal ribosomal protein uS7 family. Part of the 30S ribosomal subunit. Contacts proteins S9 and S11.

In terms of biological role, one of the primary rRNA binding proteins, it binds directly to 16S rRNA where it nucleates assembly of the head domain of the 30S subunit. Is located at the subunit interface close to the decoding center, probably blocks exit of the E-site tRNA. This is Small ribosomal subunit protein uS7 from Xylella fastidiosa (strain M12).